We begin with the raw amino-acid sequence, 172 residues long: Large ribosomal subunit protein uL10 (172 aa).

This sequence belongs to the universal ribosomal protein uL10 family. In terms of assembly, part of the ribosomal stalk of the 50S ribosomal subunit. The N-terminus interacts with L11 and the large rRNA to form the base of the stalk. The C-terminus forms an elongated spine to which L12 dimers bind in a sequential fashion forming a multimeric L10(L12)X complex.

Functionally, forms part of the ribosomal stalk, playing a central role in the interaction of the ribosome with GTP-bound translation factors. This chain is Large ribosomal subunit protein uL10, found in Dinoroseobacter shibae (strain DSM 16493 / NCIMB 14021 / DFL 12).